The primary structure comprises 521 residues: DEAD-box ATP-dependent RNA helicase 12 (521 aa).

A disordered region spans residues 1–97 (MHHPRARYPP…QQWLRRDQAT (97 aa)). A compositionally biased stretch (gly residues) spans 13–50 (TSGGGGGGGGGGGGGRGNGGGGFGGGGGGGGGNHGYYG). Positions 51–89 (RGPQPQPQQQHYHHQAQQLHQHQQQQQHAQRNSSSQQQQ) are enriched in low complexity. Positions 147–175 (NEFEDYFLKRELLMGIYEKGFERPSPIQE) match the Q motif motif. In terms of domain architecture, Helicase ATP-binding spans 178–348 (IPIALTGSDI…EKYLPRPYVI (171 aa)). ATP is bound at residue 191 to 198 (AKNGTGKT). The DEAD box signature appears at 296-299 (DEAD). The region spanning 358-518 (GITQYYAFVE…TIPPQIDLAV (161 aa)) is the Helicase C-terminal domain.

This sequence belongs to the DEAD box helicase family. DDX6/DHH1 subfamily.

The protein localises to the cytoplasm. Its subcellular location is the P-body. The catalysed reaction is ATP + H2O = ADP + phosphate + H(+). Its function is as follows. ATP-dependent RNA helicase involved in mRNA turnover, and more specifically in mRNA decapping. This Oryza sativa subsp. japonica (Rice) protein is DEAD-box ATP-dependent RNA helicase 12.